Here is a 179-residue protein sequence, read N- to C-terminus: uncharacterized protein (179 aa).

3 helical membrane passes run 29–49, 76–96, and 97–117; these read LLGI…GPLI, AKHM…DAYS, and GAII…LLWA.

This sequence belongs to the DP1 family.

It is found in the membrane. This is an uncharacterized protein from Encephalitozoon cuniculi (strain GB-M1) (Microsporidian parasite).